A 1029-amino-acid chain; its full sequence is Putative guanine nucleotide-exchange factor SED4 (1029 aa).

Over 1–344 the chain is Cytoplasmic; that stretch reads MVFDSEYDLG…AMGGSNLWKS (344 aa). 2 WD repeats span residues 257 to 296 and 300 to 339; these read KDYK…VIKL and VHKD…MGGS. The chain crosses the membrane as a helical; Signal-anchor for type II membrane protein span at residues 345-365; it reads LLRFLFNVMKLAVVVIWAHLF. Over 366 to 1029 the chain is Lumenal; sequence YKYDLHHKLY…TQHNVINDEL (664 aa). A glycan (N-linked (GlcNAc...) asparagine) is linked at Asn-579. Positions 579–592 are enriched in low complexity; sequence NASTSISIEESTNS. 3 disordered regions span residues 579-673, 710-732, and 747-821; these read NAST…NSIV, VVDE…VGSI, and EAVK…SQIS. Over residues 593-603 the composition is skewed to polar residues; sequence HSTFIESSSSL. Asn-608 carries N-linked (GlcNAc...) asparagine glycosylation. Residues 613–628 are compositionally biased toward basic and acidic residues; that stretch reads SSREISSETSIIKEDM. The segment covering 633–642 has biased composition (polar residues); it reads ENVSEQSATD. N-linked (GlcNAc...) asparagine glycosylation is found at Asn-634 and Asn-647. Over residues 643–654 the composition is skewed to basic and acidic residues; sequence KVNKNQSIDKID. The span at 655 to 672 shows a compositional bias: low complexity; it reads VSSSSSIPTSSEGSSNSI. Residues 712–722 show a composition bias toward basic and acidic residues; it reads DENHSESKLPT. 10 N-linked (GlcNAc...) asparagine glycosylation sites follow: Asn-714, Asn-754, Asn-774, Asn-792, Asn-806, Asn-855, Asn-865, Asn-874, Asn-884, and Asn-966. 2 stretches are compositionally biased toward polar residues: residues 750–762 and 771–782; these read KTSS…SQVT and RVSNQSLSTVST. Over residues 783–799 the composition is skewed to basic and acidic residues; sequence EHTEMKESSNLTEKKPE. The segment covering 800-812 has biased composition (low complexity); sequence SNSPESNLSESSL. A compositionally biased stretch (low complexity) spans 858 to 867; sequence LVDSQSSNSS. Disordered regions lie at residues 858–886, 963–982, and 1003–1029; these read LVDS…QNET, TPEN…FMTE, and VAQQ…NDEL. Residues 868–886 show a composition bias toward polar residues; the sequence is VKTVETNVSQDEQTSQNET. Positions 1026 to 1029 match the Prevents secretion from ER motif; that stretch reads NDEL.

This sequence belongs to the WD repeat SEC12 family.

The protein resides in the endoplasmic reticulum membrane. Its subcellular location is the golgi apparatus membrane. In terms of biological role, putative guanine nucleotide-exchange factor (GEF) involved in the formation or budding of transport vesicles from the ER. Positive regulator of SAR1 probably through inhibition of the GTPase activation by SEC23. This chain is Putative guanine nucleotide-exchange factor SED4 (SED4), found in Candida glabrata (strain ATCC 2001 / BCRC 20586 / JCM 3761 / NBRC 0622 / NRRL Y-65 / CBS 138) (Yeast).